A 143-amino-acid chain; its full sequence is Pre-mRNA-splicing factor U5-Cwc21 (143 aa).

Positions Glu27–Asn70 constitute a CWF21 domain.

Belongs to the CWC21 family. As to quaternary structure, associates with the NTC complex (or PRP19-associated complex). The NTC complex associates with the spliceosome after the release of the U1 and U4 snRNAs and forms the CWC spliceosome subcomplex reminiscent of a late-stage spliceosome. Associates specifically with U5-containing snRNPs.

The protein resides in the cytoplasm. Its subcellular location is the nucleus. In terms of biological role, essential protein involved in pre-mRNA cis- and trans-splicing. May function at or prior to the first catalytic step of splicing at the catalytic center of the spliceosome. May do so by stabilizing the catalytic center or the position of the RNA substrate. The chain is Pre-mRNA-splicing factor U5-Cwc21 from Trypanosoma brucei brucei (strain 927/4 GUTat10.1).